An 831-amino-acid chain; its full sequence is Cadherin-related family member 5 (831 aa).

The first 28 residues, 1-28 (MGAPALLWPSLLLPWLTVLFGQPPGTLA), serve as a signal peptide directing secretion. The Extracellular segment spans residues 29 to 641 (QTQVCSVNQT…GQRFSTVDMA (613 aa)). N-linked (GlcNAc...) asparagine glycosylation is found at asparagine 36, asparagine 45, asparagine 84, asparagine 135, asparagine 143, asparagine 173, asparagine 201, asparagine 287, asparagine 311, asparagine 408, and asparagine 475. Cadherin domains are found at residues 53–125 (VNIF…DNAP), 128–240 (SFEI…TPWF), 252–357 (IHAQ…PLQF), and 358–459 (SQSL…ERER). The disordered stretch occupies residues 452–632 (IQVSERERTP…STGAGEQGDG (181 aa)). Positions 473 to 491 (SSNTTMEAPLTSGTSQRPA) are enriched in polar residues. The span at 505–540 (GGTTLRPPTPASSIPGGSPTLGTSTSPQTTTPGGDS) shows a compositional bias: low complexity. Polar residues predominate over residues 541–554 (AQTPKPGTSHPTAP). A run of 2 repeats spans residues 541–571 (AQTP…RSDS) and 572–602 (TQTP…SGSS). The segment at 541–614 (AQTPKPGTSH…TPKPGTSQST (74 aa)) is 3 X 31 AA approximate tandem repeats. Residues 555 to 572 (TSRTSTSLMTTSSRSDST) show a composition bias toward low complexity. Polar residues-rich tracts occupy residues 573 to 582 (QTPKPGTSQP) and 589 to 623 (ASTS…SLPS). The stretch at 605–614 (TPKPGTSQST) is one 3; truncated repeat. Residues 642-662 (VLGGVLGALLLLALICLVILV) traverse the membrane as a helical segment. Over 663–831 (HKHYRHRLAC…FGVDADNTYI (169 aa)) the chain is Cytoplasmic. Positions 663 to 831 (HKHYRHRLAC…FGVDADNTYI (169 aa)) are mediates interaction with USH1C and MYO7B and is required for proper localization to microvilli tips and function in microvilli organization. Disordered regions lie at residues 675 to 774 (GKAS…GGYK) and 793 to 831 (EPTA…NTYI). 3 positions are modified to phosphoserine: serine 699, serine 721, and serine 725. Pro residues predominate over residues 716-738 (PLRPPSPMSSSPTPPSSTPPSPQ). Threonine 728 carries the post-translational modification Phosphothreonine. Residues serine 736 and serine 753 each carry the phosphoserine modification. The segment covering 761–771 (LTKERRPEGEG) has biased composition (basic and acidic residues). Position 795 is a phosphothreonine (threonine 795). The span at 797 to 807 (DVDSASASGSE) shows a compositional bias: low complexity. Residues serine 802, serine 804, and serine 806 each carry the phosphoserine modification.

Part of the IMAC/intermicrovillar adhesion complex/intermicrovillar tip-link complex composed of ANKS4B, MYO7B, USH1C, CDHR2 and CDHR5. Interacts (via cytoplasmic domain) with USH1C and MYO7B; required for proper localization of CDHR5 to microvilli tips and its function in brush border differentiation. N- and O-glycosylated.

It localises to the apical cell membrane. It is found in the cell projection. The protein resides in the microvillus membrane. Functionally, intermicrovillar adhesion molecule that forms, via its extracellular domain, calcium-dependent heterophilic complexes with CDHR2 on adjacent microvilli. Thereby, controls the packing of microvilli at the apical membrane of epithelial cells. Through its cytoplasmic domain, interacts with microvillus cytoplasmic proteins to form the intermicrovillar adhesion complex/IMAC. This complex plays a central role in microvilli and epithelial brush border differentiation. The polypeptide is Cadherin-related family member 5 (Mus musculus (Mouse)).